We begin with the raw amino-acid sequence, 427 residues long: uncharacterized protein (427 aa).

The stretch at 135-168 (PILKQKLVSLESKVKKIDKEMEKHNDLLKEIQEN) forms a coiled coil.

This is an uncharacterized protein from Arabidopsis thaliana (Mouse-ear cress).